The following is a 174-amino-acid chain: RNA pyrophosphohydrolase (174 aa).

In terms of domain architecture, Nudix hydrolase spans 14–167 (PYRPCVGLMV…KRKVYEEVVA (154 aa)). The Nudix box signature appears at 55–76 (GGIDKGEEPLEAAIRELYEETG).

This sequence belongs to the Nudix hydrolase family. RppH subfamily. Requires a divalent metal cation as cofactor.

Its function is as follows. Accelerates the degradation of transcripts by removing pyrophosphate from the 5'-end of triphosphorylated RNA, leading to a more labile monophosphorylated state that can stimulate subsequent ribonuclease cleavage. This Brucella anthropi (strain ATCC 49188 / DSM 6882 / CCUG 24695 / JCM 21032 / LMG 3331 / NBRC 15819 / NCTC 12168 / Alc 37) (Ochrobactrum anthropi) protein is RNA pyrophosphohydrolase.